Reading from the N-terminus, the 475-residue chain is Trifunctional enzyme subunit beta, mitochondrial (475 aa).

The N-terminal 34 residues, Met1–Gln34, are a transit peptide targeting the mitochondrion. The residue at position 53 (Lys53) is an N6-succinyllysine. Lys73 is subject to N6-acetyllysine; alternate. Lys73 carries the post-translational modification N6-succinyllysine; alternate. The Acyl-thioester intermediate role is filled by Cys139. The stretch at Ile174–Asn221 is an intramembrane region. Lys189 carries the post-translational modification N6-acetyllysine; alternate. At Lys189 the chain carries N6-succinyllysine; alternate. Lys191, Lys273, and Lys292 each carry N6-succinyllysine. Residue Lys294 is modified to N6-acetyllysine; alternate. At Lys294 the chain carries N6-succinyllysine; alternate. Lys299 carries the N6-acetyllysine modification. Lys333 carries the N6-acetyllysine; alternate modification. Residue Lys333 is modified to N6-succinyllysine; alternate. Residues Lys349 and Lys362 each carry the N6-acetyllysine modification. Catalysis depends on Cys459, which acts as the Proton donor/acceptor.

It belongs to the thiolase-like superfamily. Thiolase family. As to quaternary structure, heterotetramer of 2 alpha/HADHA and 2 beta/HADHB subunits; forms the mitochondrial trifunctional enzyme. Also purified as higher order heterooligomers including a 4 alpha/HADHA and 4 beta/HADHB heterooligomer which physiological significance remains unclear. The mitochondrial trifunctional enzyme interacts with MTLN. Interacts with RSAD2/viperin.

The protein resides in the mitochondrion. It localises to the mitochondrion inner membrane. The protein localises to the mitochondrion outer membrane. Its subcellular location is the endoplasmic reticulum. It catalyses the reaction an acyl-CoA + acetyl-CoA = a 3-oxoacyl-CoA + CoA. The enzyme catalyses butanoyl-CoA + acetyl-CoA = 3-oxohexanoyl-CoA + CoA. It carries out the reaction hexanoyl-CoA + acetyl-CoA = 3-oxooctanoyl-CoA + CoA. The catalysed reaction is octanoyl-CoA + acetyl-CoA = 3-oxodecanoyl-CoA + CoA. It catalyses the reaction decanoyl-CoA + acetyl-CoA = 3-oxododecanoyl-CoA + CoA. The enzyme catalyses dodecanoyl-CoA + acetyl-CoA = 3-oxotetradecanoyl-CoA + CoA. It carries out the reaction tetradecanoyl-CoA + acetyl-CoA = 3-oxohexadecanoyl-CoA + CoA. Its pathway is lipid metabolism; fatty acid beta-oxidation. Mitochondrial trifunctional enzyme catalyzes the last three of the four reactions of the mitochondrial beta-oxidation pathway. The mitochondrial beta-oxidation pathway is the major energy-producing process in tissues and is performed through four consecutive reactions breaking down fatty acids into acetyl-CoA. Among the enzymes involved in this pathway, the trifunctional enzyme exhibits specificity for long-chain fatty acids. Mitochondrial trifunctional enzyme is a heterotetrameric complex composed of two proteins, the trifunctional enzyme subunit alpha/HADHA carries the 2,3-enoyl-CoA hydratase and the 3-hydroxyacyl-CoA dehydrogenase activities, while the trifunctional enzyme subunit beta/HADHB described here bears the 3-ketoacyl-CoA thiolase activity. In Rattus norvegicus (Rat), this protein is Trifunctional enzyme subunit beta, mitochondrial (Hadhb).